We begin with the raw amino-acid sequence, 549 residues long: Hydroxylamine reductase (549 aa).

C3, C6, C18, and C25 together coordinate [2Fe-2S] cluster. Positions 248, 272, 316, 404, 432, 457, 491, and 493 each coordinate hybrid [4Fe-2O-2S] cluster. At C404 the chain carries Cysteine persulfide.

The protein belongs to the HCP family. It depends on [2Fe-2S] cluster as a cofactor. Requires hybrid [4Fe-2O-2S] cluster as cofactor.

Its subcellular location is the cytoplasm. It catalyses the reaction A + NH4(+) + H2O = hydroxylamine + AH2 + H(+). Its function is as follows. Catalyzes the reduction of hydroxylamine to form NH(3) and H(2)O. This Aeromonas hydrophila subsp. hydrophila (strain ATCC 7966 / DSM 30187 / BCRC 13018 / CCUG 14551 / JCM 1027 / KCTC 2358 / NCIMB 9240 / NCTC 8049) protein is Hydroxylamine reductase.